The following is a 188-amino-acid chain: Segregation and condensation protein B (188 aa).

It belongs to the ScpB family. In terms of assembly, homodimer. Homodimerization may be required to stabilize the binding of ScpA to the Smc head domains. Component of a cohesin-like complex composed of ScpA, ScpB and the Smc homodimer, in which ScpA and ScpB bind to the head domain of Smc. The presence of the three proteins is required for the association of the complex with DNA.

The protein resides in the cytoplasm. Participates in chromosomal partition during cell division. May act via the formation of a condensin-like complex containing Smc and ScpA that pull DNA away from mid-cell into both cell halves. In Streptococcus gordonii (strain Challis / ATCC 35105 / BCRC 15272 / CH1 / DL1 / V288), this protein is Segregation and condensation protein B.